Consider the following 1556-residue polypeptide: uncharacterized protein (1556 aa).

This is an uncharacterized protein from Ictalurid herpesvirus 1 (strain Auburn) (IcHV-1).